Reading from the N-terminus, the 728-residue chain is Leucine-rich repeat and calponin homology domain-containing protein 1 (728 aa).

The span at 24 to 36 (HHPHHHHHHHQHH) shows a compositional bias: basic residues. A disordered region spans residues 24 to 57 (HHPHHHHHHHQHHGGTGAPGGAGGGGGGSGGFNL). Residues 37-54 (GGTGAPGGAGGGGGGSGG) show a composition bias toward gly residues. LRR repeat units lie at residues 98–119 (DTVQ…LCHF), 121–143 (SLEI…VNLQ), 144–166 (MLTY…CGLP), 167–187 (LKVL…IGQL), 189–210 (QLME…IGQL), 212–234 (SLRE…VDLS), 235–255 (LVKF…FREM), 257–278 (QLQV…ICTK), and 283–304 (IFKY…YLHT). Basic and acidic residues predominate over residues 311 to 322 (HQHVEDGKKDSD). Residues 311-348 (HQHVEDGKKDSDSGVGSDNGDKRLSATEPSDEDTVSLN) form a disordered region. Residue serine 370 is modified to Phosphoserine. The tract at residues 377-398 (HQEFQPEPSLLGDSTNSGEERD) is disordered. Serine 409 is modified (phosphoserine). Positions 516-525 (LQSNGSQYSP) are enriched in polar residues. Residues 516 to 547 (LQSNGSQYSPNEIRENSPAVSPTTNSTAPFGL) are disordered. Residues serine 532 and serine 536 each carry the phosphoserine modification. Polar residues predominate over residues 533–543 (PAVSPTTNSTA). Threonine 568 carries the post-translational modification Phosphothreonine. The Calponin-homology (CH) domain maps to 576–692 (MREEKELVEQ…TLLALGEKAP (117 aa)).

Interacts (via LRR repeats) with unphosphorylated DOCK8 (via DHR-2 domain); the interaction prevents the interaction between DOCK8 and CDC42.

Its subcellular location is the cytoplasm. In terms of biological role, acts as a negative regulator of GTPase CDC42 by sequestering CDC42-guanine exchange factor DOCK8. Probably by preventing CDC42 activation, negatively regulates CD4(+) T-cell migration. This is Leucine-rich repeat and calponin homology domain-containing protein 1 (LRCH1) from Homo sapiens (Human).